The sequence spans 109 residues: Mitochondrial pyruvate carrier 2 (109 aa).

A run of 3 helical transmembrane segments spans residues 19 to 35 (IHFW…IANI), 51 to 67 (IAVT…STII), and 74 to 90 (LFSV…YQLT).

Belongs to the mitochondrial pyruvate carrier (MPC) (TC 2.A.105) family.

The protein localises to the mitochondrion inner membrane. Its function is as follows. Mediates the uptake of pyruvate into mitochondria. The protein is Mitochondrial pyruvate carrier 2 of Arabidopsis thaliana (Mouse-ear cress).